The following is a 337-amino-acid chain: Ketol-acid reductoisomerase (NADP(+)) (337 aa).

The KARI N-terminal Rossmann domain maps to 3–183 (VEVFYDDDAD…GGTRAGVIKT (181 aa)). NADP(+) contacts are provided by residues 26 to 29 (YGSQ), Ser-52, Ser-54, and 84 to 87 (DTAQ). The active site involves His-109. Residue Gly-135 coordinates NADP(+). The 146-residue stretch at 184 to 329 (TFTEETETDL…GRLRAMMSWV (146 aa)) folds into the KARI C-terminal knotted domain. Positions 192, 196, 228, and 232 each coordinate Mg(2+). Residue Ser-253 coordinates substrate.

This sequence belongs to the ketol-acid reductoisomerase family. It depends on Mg(2+) as a cofactor.

It carries out the reaction (2R)-2,3-dihydroxy-3-methylbutanoate + NADP(+) = (2S)-2-acetolactate + NADPH + H(+). The enzyme catalyses (2R,3R)-2,3-dihydroxy-3-methylpentanoate + NADP(+) = (S)-2-ethyl-2-hydroxy-3-oxobutanoate + NADPH + H(+). It participates in amino-acid biosynthesis; L-isoleucine biosynthesis; L-isoleucine from 2-oxobutanoate: step 2/4. The protein operates within amino-acid biosynthesis; L-valine biosynthesis; L-valine from pyruvate: step 2/4. Involved in the biosynthesis of branched-chain amino acids (BCAA). Catalyzes an alkyl-migration followed by a ketol-acid reduction of (S)-2-acetolactate (S2AL) to yield (R)-2,3-dihydroxy-isovalerate. In the isomerase reaction, S2AL is rearranged via a Mg-dependent methyl migration to produce 3-hydroxy-3-methyl-2-ketobutyrate (HMKB). In the reductase reaction, this 2-ketoacid undergoes a metal-dependent reduction by NADPH to yield (R)-2,3-dihydroxy-isovalerate. This is Ketol-acid reductoisomerase (NADP(+)) from Salinispora tropica (strain ATCC BAA-916 / DSM 44818 / JCM 13857 / NBRC 105044 / CNB-440).